Consider the following 228-residue polypeptide: Probable septum site-determining protein MinC (228 aa).

This sequence belongs to the MinC family. Interacts with MinD and FtsZ.

Functionally, cell division inhibitor that blocks the formation of polar Z ring septums. Rapidly oscillates between the poles of the cell to destabilize FtsZ filaments that have formed before they mature into polar Z rings. Prevents FtsZ polymerization. In Pectobacterium atrosepticum (strain SCRI 1043 / ATCC BAA-672) (Erwinia carotovora subsp. atroseptica), this protein is Probable septum site-determining protein MinC.